A 254-amino-acid chain; its full sequence is Membrane protein US20 (254 aa).

The next 7 helical transmembrane spans lie at 31 to 51, 62 to 82, 89 to 109, 114 to 134, 143 to 163, 178 to 198, and 208 to 228; these read AIFI…WLGF, YSFF…YTLG, ATVL…FQMC, VLVG…GLAF, WKCI…LALL, AFSI…VIFF, and AVCL…MLSG.

It localises to the host membrane. This chain is Membrane protein US20 (US20), found in Homo sapiens (Human).